The sequence spans 459 residues: Phosphoglucosamine mutase (459 aa).

Ser-102 serves as the catalytic Phosphoserine intermediate. Mg(2+) is bound by residues Ser-102, Asp-243, Asp-245, and Asp-247. Ser-102 carries the phosphoserine modification.

Belongs to the phosphohexose mutase family. It depends on Mg(2+) as a cofactor. Activated by phosphorylation.

The catalysed reaction is alpha-D-glucosamine 1-phosphate = D-glucosamine 6-phosphate. Its function is as follows. Catalyzes the conversion of glucosamine-6-phosphate to glucosamine-1-phosphate. This Bartonella henselae (strain ATCC 49882 / DSM 28221 / CCUG 30454 / Houston 1) (Rochalimaea henselae) protein is Phosphoglucosamine mutase.